Consider the following 364-residue polypeptide: Protein IncC (364 aa).

Basic and acidic residues-rich tracts occupy residues 1–10 (MGVIHEETAY), 26–42 (ADHR…EATG), and 89–100 (HRPEVGSGRQEK). 2 disordered regions span residues 1-63 (MGVI…ASRV) and 75-102 (VRAG…EKTG).

It belongs to the ParA family.

This is one of the proteins encoded by the trfB operon; it is involved in plasmid maintenance and replication. This Escherichia coli protein is Protein IncC (incC).